We begin with the raw amino-acid sequence, 176 residues long: Calponin-1 (176 aa).

Positions 22–125 constitute a Calponin-homology (CH) domain; sequence PQTERQLRVW…STLIALASQA (104 aa). The Calponin-like repeat unit spans residues 158–176; that stretch reads IGLQMGTNKFASQQGMTAY. Phosphothreonine; by ROCK2 is present on Thr164. Ser169 carries the phosphoserine; by ROCK2 modification. A Phosphothreonine; by ROCK2 modification is found at Thr174.

Belongs to the calponin family. Smooth muscle, and tissues containing significant amounts of smooth muscle.

Its function is as follows. Thin filament-associated protein that is implicated in the regulation and modulation of smooth muscle contraction. It is capable of binding to actin, calmodulin and tropomyosin. The interaction of calponin with actin inhibits the actomyosin Mg-ATPase activity. This Meleagris gallopavo (Wild turkey) protein is Calponin-1 (CNN1).